Consider the following 132-residue polypeptide: Profilin-1 (132 aa).

It belongs to the profilin family. As to quaternary structure, occurs in many kinds of cells as a complex with monomeric actin in a 1:1 ratio. As to expression, expressed in the nerve ring during late embryonic stages. In adults, expression is seen in the neurons, vulva and somatic gonad.

It is found in the cytoplasm. It localises to the cytoskeleton. Its function is as follows. Binds to actin and affects the structure of the cytoskeleton. At high concentrations, profilin prevents the polymerization of actin, whereas it enhances it at low concentrations. By binding to PIP2, it inhibits the formation of IP3 and DG. Also binds to poly(L-proline) and phosphatidylinositol 4,5-bisphosphate micelles. The chain is Profilin-1 (pfn-1) from Caenorhabditis elegans.